The chain runs to 317 residues: tRNA dimethylallyltransferase (317 aa).

13–20 contacts ATP; sequence GPTASGKS. 15–20 is a binding site for substrate; the sequence is TASGKS.

The protein belongs to the IPP transferase family. As to quaternary structure, monomer. Requires Mg(2+) as cofactor.

The catalysed reaction is adenosine(37) in tRNA + dimethylallyl diphosphate = N(6)-dimethylallyladenosine(37) in tRNA + diphosphate. In terms of biological role, catalyzes the transfer of a dimethylallyl group onto the adenine at position 37 in tRNAs that read codons beginning with uridine, leading to the formation of N6-(dimethylallyl)adenosine (i(6)A). This chain is tRNA dimethylallyltransferase, found in Kineococcus radiotolerans (strain ATCC BAA-149 / DSM 14245 / SRS30216).